A 289-amino-acid chain; its full sequence is Glucosamine-6-phosphate deaminase 1 (289 aa).

Lysine 64 bears the N6-acetyllysine mark. Aspartate 72 functions as the Proton acceptor; for enolization step in the catalytic mechanism. The active-site For ring-opening step is aspartate 141. Histidine 143 functions as the Proton acceptor; for ring-opening step in the catalytic mechanism. Glutamate 148 acts as the For ring-opening step in catalysis. At threonine 161 the chain carries Phosphothreonine.

Belongs to the glucosamine/galactosamine-6-phosphate isomerase family. In terms of assembly, homohexamer.

It localises to the cytoplasm. The enzyme catalyses alpha-D-glucosamine 6-phosphate + H2O = beta-D-fructose 6-phosphate + NH4(+). It functions in the pathway nucleotide-sugar biosynthesis; UDP-N-acetyl-alpha-D-glucosamine biosynthesis; alpha-D-glucosamine 6-phosphate from D-fructose 6-phosphate: step 1/1. With respect to regulation, allosterically activated by N-acetylglucosamine-6-phosphate (GlcNAc6P). Its function is as follows. Catalyzes the reversible conversion of alpha-D-glucosamine 6-phosphate (GlcN-6P) into beta-D-fructose 6-phosphate (Fru-6P) and ammonium ion, a regulatory reaction step in de novo uridine diphosphate-N-acetyl-alpha-D-glucosamine (UDP-GlcNAc) biosynthesis via hexosamine pathway. Deamination is coupled to aldo-keto isomerization mediating the metabolic flux from UDP-GlcNAc toward Fru-6P. At high ammonium level can drive amination and isomerization of Fru-6P toward hexosamines and UDP-GlcNAc synthesis. Has a role in fine tuning the metabolic fluctuations of cytosolic UDP-GlcNAc and their effects on hyaluronan synthesis that occur during tissue remodeling. Seems to trigger calcium oscillations in mammalian eggs. These oscillations serve as the essential trigger for egg activation and early development of the embryo. This Homo sapiens (Human) protein is Glucosamine-6-phosphate deaminase 1.